Consider the following 106-residue polypeptide: L-rhamnose mutarotase (106 aa).

Tyrosine 20 contributes to the substrate binding site. Histidine 24 serves as the catalytic Proton donor. Residues tyrosine 43 and 78-79 (WW) contribute to the substrate site.

The protein belongs to the rhamnose mutarotase family. As to quaternary structure, homodimer.

It is found in the cytoplasm. It catalyses the reaction alpha-L-rhamnose = beta-L-rhamnose. It functions in the pathway carbohydrate metabolism; L-rhamnose metabolism. In terms of biological role, involved in the anomeric conversion of L-rhamnose. In Rhizobium etli (strain ATCC 51251 / DSM 11541 / JCM 21823 / NBRC 15573 / CFN 42), this protein is L-rhamnose mutarotase.